Reading from the N-terminus, the 227-residue chain is Protein PhlB (227 aa).

The N-terminal stretch at 1 to 35 (MPEGRRLRRALAIALLALVAVTGLLMMAKEQQMGQ) is a signal peptide. ANK repeat units follow at residues 75–104 (RQVT…DPAA), 108–137 (DGNS…QMNV), 142–171 (TGAT…DTTL), and 175–204 (LGDT…MPGR).

Its function is as follows. Cell-protective protein that neutralizes the intracellular lysis capacity of phospholipase A1 through a direct interaction with the enzyme. The chain is Protein PhlB (phlB) from Serratia liquefaciens.